The primary structure comprises 223 residues: Adenylate kinase (223 aa).

10 to 15 serves as a coordination point for ATP; the sequence is GSGKGT. The interval 30 to 59 is NMP; the sequence is ESGAIFREHIGGGTELGKQAKAFIERGDLV. AMP is bound by residues Ser-31, Arg-36, 57–59, 84–87, and Gln-91; these read DLV and GFPR. The segment at 125–164 is LID; sequence GRRLCKNDNNHPNNIFIDAIKPNGDVCRVCGGELSARSDD. ATP is bound at residue Arg-126. The AMP site is built by Arg-161 and Arg-173. Residue Gly-209 coordinates ATP.

This sequence belongs to the adenylate kinase family. In terms of assembly, monomer.

It localises to the cytoplasm. The enzyme catalyses AMP + ATP = 2 ADP. It participates in purine metabolism; AMP biosynthesis via salvage pathway; AMP from ADP: step 1/1. Catalyzes the reversible transfer of the terminal phosphate group between ATP and AMP. Plays an important role in cellular energy homeostasis and in adenine nucleotide metabolism. In Nitratidesulfovibrio vulgaris (strain ATCC 29579 / DSM 644 / CCUG 34227 / NCIMB 8303 / VKM B-1760 / Hildenborough) (Desulfovibrio vulgaris), this protein is Adenylate kinase.